Here is a 198-residue protein sequence, read N- to C-terminus: Recombination protein RecR (198 aa).

The segment at Cys-57–Cys-72 adopts a C4-type zinc-finger fold. Residues Thr-80 to Ala-175 form the Toprim domain.

This sequence belongs to the RecR family.

May play a role in DNA repair. It seems to be involved in an RecBC-independent recombinational process of DNA repair. It may act with RecF and RecO. The chain is Recombination protein RecR from Streptococcus thermophilus (strain CNRZ 1066).